Here is a 54-residue protein sequence, read N- to C-terminus: Ovomucoid (54 aa).

The region spanning 4–54 is the Kazal-like domain; sequence VDCSDYPKPVCSLDYMPLCGSDNTTYNNKCIFCNAVVDSNGTITLSHFGKC. Disulfide bonds link Cys6–Cys36, Cys14–Cys33, and Cys22–Cys54. A glycan (N-linked (GlcNAc...) asparagine) is linked at Asn43.

The protein localises to the secreted. The chain is Ovomucoid from Haemorhous mexicanus (House finch).